The sequence spans 173 residues: MTRILGIDPGSQRTGVGVIDVDEYGCSRHVYHAPLVLLGQSSFAGRLKQLLLGLSAVIEEYSPKEVAIEKVFMSKNADSALKLGQARGVAISAVVLRDLPVHEYAARQIKLAVVGRGGADKQQIQHMVGVMLNLQGRLQSDAADALAVAITHAHVSATAQRLGVSTKQAWSRK.

Active-site residues include D8, E69, and D141. Mg(2+) contacts are provided by D8, E69, and D141.

This sequence belongs to the RuvC family. In terms of assembly, homodimer which binds Holliday junction (HJ) DNA. The HJ becomes 2-fold symmetrical on binding to RuvC with unstacked arms; it has a different conformation from HJ DNA in complex with RuvA. In the full resolvosome a probable DNA-RuvA(4)-RuvB(12)-RuvC(2) complex forms which resolves the HJ. Requires Mg(2+) as cofactor.

The protein resides in the cytoplasm. It carries out the reaction Endonucleolytic cleavage at a junction such as a reciprocal single-stranded crossover between two homologous DNA duplexes (Holliday junction).. In terms of biological role, the RuvA-RuvB-RuvC complex processes Holliday junction (HJ) DNA during genetic recombination and DNA repair. Endonuclease that resolves HJ intermediates. Cleaves cruciform DNA by making single-stranded nicks across the HJ at symmetrical positions within the homologous arms, yielding a 5'-phosphate and a 3'-hydroxyl group; requires a central core of homology in the junction. The consensus cleavage sequence is 5'-(A/T)TT(C/G)-3'. Cleavage occurs on the 3'-side of the TT dinucleotide at the point of strand exchange. HJ branch migration catalyzed by RuvA-RuvB allows RuvC to scan DNA until it finds its consensus sequence, where it cleaves and resolves the cruciform DNA. This is Crossover junction endodeoxyribonuclease RuvC from Xylella fastidiosa (strain 9a5c).